We begin with the raw amino-acid sequence, 754 residues long: Deadenylation-dependent mRNA-decapping factor pdc2 (754 aa).

Positions Leu499 to Ala754 are interaction with lsm1.

Belongs to the PAT1 family. Interacts with dcp2. Interacts with lsm1; via C-terminus.

Its subcellular location is the cytoplasm. It localises to the nucleus. The protein resides in the P-body. Activator of decapping that functions as a general and active mechanism of translational repression and required for P-body formation. Stabilizes the 3' terminus of mRNAs and modulates the rates of mRNA-decapping that occur following deadenylation. Might be required for promoting the formation or the stabilization of the preinitiation translation complexes. Necessary for accurate chromosome transmission during cell division. Together with lsm1, recruits the deadenylase ccr4 to P-bodies. In Schizosaccharomyces pombe (strain 972 / ATCC 24843) (Fission yeast), this protein is Deadenylation-dependent mRNA-decapping factor pdc2.